Here is a 169-residue protein sequence, read N- to C-terminus: Neurotensin/neuromedin N (169 aa).

The signal sequence occupies residues 1-22 (MIGMNLQLVCLTLLAFSSWSLC).

Belongs to the neurotensin family. Interacts with NTSR1. Interacts with SORT1. Interacts with SORL1. In terms of processing, neurotensin is cleaved and degraded by Angiotensin-converting enzyme (ACE) and neprilysin (MME).

The protein localises to the secreted. The protein resides in the cytoplasmic vesicle. Its subcellular location is the secretory vesicle. In terms of biological role, neurotensin may play an endocrine or paracrine role in the regulation of fat metabolism. It causes contraction of smooth muscle. In Rattus norvegicus (Rat), this protein is Neurotensin/neuromedin N (Nts).